Here is a 102-residue protein sequence, read N- to C-terminus: Co-chaperonin GroES (102 aa).

The protein belongs to the GroES chaperonin family. As to quaternary structure, heptamer of 7 subunits arranged in a ring. Interacts with the chaperonin GroEL.

The protein resides in the cytoplasm. Its function is as follows. Together with the chaperonin GroEL, plays an essential role in assisting protein folding. The GroEL-GroES system forms a nano-cage that allows encapsulation of the non-native substrate proteins and provides a physical environment optimized to promote and accelerate protein folding. GroES binds to the apical surface of the GroEL ring, thereby capping the opening of the GroEL channel. The chain is Co-chaperonin GroES from Streptomyces avermitilis (strain ATCC 31267 / DSM 46492 / JCM 5070 / NBRC 14893 / NCIMB 12804 / NRRL 8165 / MA-4680).